The sequence spans 31 residues: Ranatuerin-2Ca (31 aa).

A disulfide bridge connects residues cysteine 24 and cysteine 29.

As to expression, expressed by the skin glands.

It localises to the secreted. Antibacterial activity against Gram-positive bacterium S.aureus and Gram-negative bacterium E.coli. Has activity against C.albicans. The chain is Ranatuerin-2Ca from Lithobates clamitans (Green frog).